Here is a 1174-residue protein sequence, read N- to C-terminus: ATP-dependent DNA helicase SRS2 (1174 aa).

The UvrD-like helicase ATP-binding domain maps to 14–316 (QLNTQQRAAA…IILVENYRSS (303 aa)). Residue 38-43 (GTGKTK) participates in ATP binding. Residues 222–243 (LLMYTFRLLTRVRVLSNIKHVL) form a leucine-zipper region. Arg-314 contacts ATP. Positions 317-654 (QKILNTSEIL…TISTIHGAKG (338 aa)) constitute a UvrD-like helicase C-terminal domain. A disordered region spans residues 676–704 (DDKKDESEEDEEEDQENSKKDASPKKTRV). Ser-833 is modified (phosphoserine). 3 disordered regions span residues 865–896 (SKIN…SPTK), 909–973 (NVPS…DKVT), and 994–1024 (ELHP…SNSD). Composition is skewed to polar residues over residues 909 to 922 (NVPS…STGK) and 935 to 955 (TDIS…NKTS). Positions 956 to 973 (HMSDDLMRPSPTRKDKVT) are enriched in basic and acidic residues. Residues 1007–1023 (SLTSSEFSGFSSACSNS) show a composition bias toward low complexity.

This sequence belongs to the helicase family. UvrD subfamily.

The protein resides in the nucleus. It carries out the reaction Couples ATP hydrolysis with the unwinding of duplex DNA by translocating in the 3'-5' direction.. It catalyses the reaction ATP + H2O = ADP + phosphate + H(+). In terms of biological role, ATP-dependent DNA helicase involved in DNA repair at least for UV-induced lesions. The polarity of the helicase activity was determined to be 3' to 5'. The sequence is that of ATP-dependent DNA helicase SRS2 (SRS2) from Saccharomyces cerevisiae (strain ATCC 204508 / S288c) (Baker's yeast).